We begin with the raw amino-acid sequence, 270 residues long: Bifunctional folate synthesis protein (270 aa).

A DHNA region spans residues 1–119; the sequence is MDQLQIKDLE…TCSVTIHRRK (119 aa). Substrate-binding positions include E21, Y53, and 72–73; that span reads IE. Catalysis depends on K99, which acts as the Proton donor/acceptor; for DHNA activity. Positions 120–270 are HPPK; the sequence is QRAFIALGSN…IRNLYDALKK (151 aa). Residues 160–163, 171–173, 192–195, 200–215, 227–233, and 238–240 contribute to the ATP site; these read TEPW, FAN, LAIE, RVRE…DLDL, DLILPHP, and RLF. Residues D212 and D214 each coordinate Mg(2+).

It in the N-terminal section; belongs to the DHNA family. In the C-terminal section; belongs to the HPPK family. In terms of assembly, homotrimer or homotetramer.

The enzyme catalyses 7,8-dihydroneopterin = 6-hydroxymethyl-7,8-dihydropterin + glycolaldehyde. The catalysed reaction is 6-hydroxymethyl-7,8-dihydropterin + ATP = (7,8-dihydropterin-6-yl)methyl diphosphate + AMP + H(+). It functions in the pathway cofactor biosynthesis; tetrahydrofolate biosynthesis; 2-amino-4-hydroxy-6-hydroxymethyl-7,8-dihydropteridine diphosphate from 7,8-dihydroneopterin triphosphate: step 3/4. The protein operates within cofactor biosynthesis; tetrahydrofolate biosynthesis; 2-amino-4-hydroxy-6-hydroxymethyl-7,8-dihydropteridine diphosphate from 7,8-dihydroneopterin triphosphate: step 4/4. In terms of biological role, catalyzes two sequential steps of tetrahydrofolate biosynthesis, the conversion of 7,8-dihydroneopterin to 6-hydroxymethyl-7,8-dihydropterin diphosphate. The polypeptide is Bifunctional folate synthesis protein (Streptococcus pneumoniae serotype 4 (strain ATCC BAA-334 / TIGR4)).